A 448-amino-acid polypeptide reads, in one-letter code: Trigger factor (448 aa).

One can recognise a PPIase FKBP-type domain in the interval 167 to 253 (GSIVRVDFVE…LKDIKRRDIP (87 aa)).

Belongs to the FKBP-type PPIase family. Tig subfamily.

It localises to the cytoplasm. It carries out the reaction [protein]-peptidylproline (omega=180) = [protein]-peptidylproline (omega=0). In terms of biological role, involved in protein export. Acts as a chaperone by maintaining the newly synthesized protein in an open conformation. Functions as a peptidyl-prolyl cis-trans isomerase. The protein is Trigger factor of Borrelia turicatae (strain 91E135).